A 193-amino-acid polypeptide reads, in one-letter code: Potassium-transporting ATPase KdpC subunit (193 aa).

A helical transmembrane segment spans residues 14 to 34; sequence ITFTFLVLCGLVYPLIVTGIA.

It belongs to the KdpC family. In terms of assembly, the system is composed of three essential subunits: KdpA, KdpB and KdpC.

The protein localises to the cell membrane. In terms of biological role, part of the high-affinity ATP-driven potassium transport (or Kdp) system, which catalyzes the hydrolysis of ATP coupled with the electrogenic transport of potassium into the cytoplasm. This subunit acts as a catalytic chaperone that increases the ATP-binding affinity of the ATP-hydrolyzing subunit KdpB by the formation of a transient KdpB/KdpC/ATP ternary complex. The protein is Potassium-transporting ATPase KdpC subunit of Bacillus mycoides (strain KBAB4) (Bacillus weihenstephanensis).